Here is an 87-residue protein sequence, read N- to C-terminus: Small ribosomal subunit protein uS17 (87 aa).

It belongs to the universal ribosomal protein uS17 family. As to quaternary structure, part of the 30S ribosomal subunit.

Its function is as follows. One of the primary rRNA binding proteins, it binds specifically to the 5'-end of 16S ribosomal RNA. The sequence is that of Small ribosomal subunit protein uS17 from Thiobacillus denitrificans (strain ATCC 25259 / T1).